We begin with the raw amino-acid sequence, 411 residues long: Calmodulin-binding receptor-like cytoplasmic kinase 2 (411 aa).

Disordered stretches follow at residues 1–44 (MPSR…DTTT) and 66–99 (SNYI…YGNA). 2 stretches are compositionally biased toward low complexity: residues 16-44 (TTSS…DTTT) and 66-95 (SNYI…VQRS). Thr108 is modified (phosphothreonine). The Protein kinase domain maps to 119 to 398 (FSPSFRIGQG…MKKCSEILWG (280 aa)). Residues 125-133 (IGQGGFGTV) and Lys147 contribute to the ATP site. Residues 134–159 (YKVKLRDGKTFAVKRAKKSMHDDRQG) are caM-binding. The active-site Proton acceptor is Asp247. Ser251 and Ser283 each carry phosphoserine. Phosphothreonine is present on residues Thr284 and Thr289. Tyr297 bears the Phosphotyrosine mark.

The protein belongs to the protein kinase superfamily. Ser/Thr protein kinase family. In terms of assembly, interacts with calmodulin (CaM) in a Ca(2+)-dependent manner.

It is found in the cytoplasm. The catalysed reaction is L-seryl-[protein] + ATP = O-phospho-L-seryl-[protein] + ADP + H(+). It catalyses the reaction L-threonyl-[protein] + ATP = O-phospho-L-threonyl-[protein] + ADP + H(+). This chain is Calmodulin-binding receptor-like cytoplasmic kinase 2 (CRCK2), found in Arabidopsis thaliana (Mouse-ear cress).